The following is a 641-amino-acid chain: PWWP domain-containing DNA repair factor 3A (641 aa).

The interval 98-329 is disordered; sequence LNERQGSSSR…LEEDEDDEEP (232 aa). At serine 156 the chain carries Phosphoserine. Basic and acidic residues-rich tracts occupy residues 194–203 and 295–307; these read QDREASRKQQ and ADTR…RPLS. Serine 307 carries the phosphoserine modification. In terms of domain architecture, PWWP spans 343-404; the sequence is VGMLVWHKYQ…KHFDCKEKQA (62 aa). Residues 463–486 form a disordered region; it reads TRFPQLSGGDPEEPVAGSPQGRRP.

This sequence belongs to the PWWP3A family. Interacts with TP53BP1 (via BRCT domain); the interaction is not dependent on its phosphorylation status. Binds nucleosomes. Interacts with trimethylated 'Lys-36' of histone H3 (H3K36me3) (in vitro).

The protein localises to the nucleus. Involved in the DNA damage response pathway by contributing to the maintenance of chromatin architecture. Recruited to the vicinity of DNA breaks by TP53BP1 and plays an accessory role to facilitate damage-induced chromatin changes and promoting chromatin relaxation. Required for efficient DNA repair and cell survival following DNA damage. The chain is PWWP domain-containing DNA repair factor 3A (PWWP3A) from Bos taurus (Bovine).